A 500-amino-acid chain; its full sequence is Lycopene beta cyclase, chloroplastic (500 aa).

The transit peptide at 1–81 (MDTLLKTPNK…ELPMYDPSKG (81 aa)) directs the protein to the chloroplast. Residue 86–114 (LAVVGGGPAGLAVAQQVSEAGLSVVSIDP) participates in NAD(+) binding.

The protein belongs to the lycopene cyclase family.

The protein localises to the plastid. It is found in the chloroplast. The enzyme catalyses a carotenoid psi-end group = a carotenoid beta-end derivative. Its pathway is carotenoid biosynthesis; beta-carotene biosynthesis. The protein operates within carotenoid biosynthesis; beta-zeacarotene biosynthesis. Functionally, catalyzes the double cyclization reaction which converts lycopene to beta-carotene and neurosporene to beta-zeacarotene. The protein is Lycopene beta cyclase, chloroplastic (LCY1) of Nicotiana tabacum (Common tobacco).